Reading from the N-terminus, the 126-residue chain is Large ribosomal subunit protein uL22c (126 aa).

It belongs to the universal ribosomal protein uL22 family. In terms of assembly, part of the 50S ribosomal subunit.

The protein resides in the plastid. The protein localises to the chloroplast. This protein binds specifically to 23S rRNA. In terms of biological role, the globular domain of the protein is located near the polypeptide exit tunnel on the outside of the subunit, while an extended beta-hairpin is found that lines the wall of the exit tunnel in the center of the 70S ribosome. The protein is Large ribosomal subunit protein uL22c (rpl22) of Cryptomeria japonica (Japanese cedar).